The sequence spans 431 residues: MPSQMREAITRLNEEFGCRIFVISLGDKKRVFDGGKVGTWAATLDELARERNVVIIVSAGNRGPRAGSRVEQGVTEYPDYLLEANNRLLEPAGAMNVITVGSIAQGDGLDADMAGDVRVRPITRANEPSPFSRVGPGLGGGTKPDLVDVGGTLIFDPVVARLRGGEDRPSAGVLTLNHNYLNRLFTAGSGTSYSAPRVGFSAGQILARFPGASANLVRALLINSAEVPQQASERLQILGSEAVRSVCGHGLIDLERAGFSDDARVTLYTEDELPLDHFAVYRIPIPEVFQEGNTERTIRVTLAYDPPVRHTRNDYAGVGMSFRLVRGCEPNFIFEHYRKRAEVEGPFPEMENRFNCKLEPGPKVREKSSVQRASITFKRGIEQYGDSYYLVVRCESGWATHVDRQPFAVVVELLQKAEVRLYERLRQRVRA.

A Peptidase S8 domain is found at 1–258 (MPSQMREAIT…HGLIDLERAG (258 aa)).

It belongs to the peptidase S8 family.

This is an uncharacterized protein from Sinorhizobium fredii (strain NBRC 101917 / NGR234).